The sequence spans 337 residues: Eukaryotic translation initiation factor 3 subunit H (337 aa).

Positions 21-153 (VQCDGLAVMK…LKAYRLTPQA (133 aa)) constitute an MPN domain.

It belongs to the eIF-3 subunit H family. Component of the eukaryotic translation initiation factor 3 (eIF-3) complex. The eIF-3 complex interacts with pix. Interacts with mxt.

The protein localises to the cytoplasm. Its function is as follows. Component of the eukaryotic translation initiation factor 3 (eIF-3) complex, which is involved in protein synthesis of a specialized repertoire of mRNAs and, together with other initiation factors, stimulates binding of mRNA and methionyl-tRNAi to the 40S ribosome. The eIF-3 complex specifically targets and initiates translation of a subset of mRNAs involved in cell proliferation. This is Eukaryotic translation initiation factor 3 subunit H from Drosophila pseudoobscura pseudoobscura (Fruit fly).